Reading from the N-terminus, the 412-residue chain is Serine hydroxymethyltransferase (412 aa).

Residues Leu-117 and 121–123 (GHL) each bind (6S)-5,6,7,8-tetrahydrofolate. Residue Lys-226 is modified to N6-(pyridoxal phosphate)lysine. 349 to 351 (SPF) is a (6S)-5,6,7,8-tetrahydrofolate binding site.

The protein belongs to the SHMT family. As to quaternary structure, homodimer. Requires pyridoxal 5'-phosphate as cofactor.

It localises to the cytoplasm. The enzyme catalyses (6R)-5,10-methylene-5,6,7,8-tetrahydrofolate + glycine + H2O = (6S)-5,6,7,8-tetrahydrofolate + L-serine. Its pathway is one-carbon metabolism; tetrahydrofolate interconversion. It functions in the pathway amino-acid biosynthesis; glycine biosynthesis; glycine from L-serine: step 1/1. In terms of biological role, catalyzes the reversible interconversion of serine and glycine with tetrahydrofolate (THF) serving as the one-carbon carrier. This reaction serves as the major source of one-carbon groups required for the biosynthesis of purines, thymidylate, methionine, and other important biomolecules. Also exhibits THF-independent aldolase activity toward beta-hydroxyamino acids, producing glycine and aldehydes, via a retro-aldol mechanism. In Geobacillus thermodenitrificans (strain NG80-2), this protein is Serine hydroxymethyltransferase.